The chain runs to 275 residues: 2'-N-acetylparomamine deacetylase (275 aa).

Residues His14, Asp17, and His166 each contribute to the Zn(2+) site.

The protein belongs to the PIGL family. Zn(2+) is required as a cofactor.

It carries out the reaction 2'-N-acetylparomamine + H2O = paromamine + acetate. It functions in the pathway antibiotic biosynthesis; butirosin biosynthesis. Its function is as follows. Deacetylase involved in the biosynthesis of butirosin by mediating deacetylation of 2'-N-acetylparomamine. In Niallia circulans (Bacillus circulans), this protein is 2'-N-acetylparomamine deacetylase (btrD).